The chain runs to 295 residues: MSGGLDVLQMKEEDVLKFLAAGTHLGGTNLDFQMEQYIYKRKSDGIYIINLKRTWEKLLLAARAIVAIENPADVSVISSRNTGQRAVLKFAAATGATPIAGRFTPGTFTNQIQAAFREPRLLVVTDPRADHQPLTEASYVNLPTIALCNTDSPLRYVDIAIPCNNKGAHSVGLMWWMLAREVLRMRGTISREHPWEVMPDLYFYRDPEEIEKEEQAAAEKAVTKEEFQGEWTAPAPEFTAAQPEVADWSEGVQVPSVPIQQFPTEDWSAQPATEDWSAAPTAQATEWVGATTEWS.

Ser-2 carries the post-translational modification N-acetylserine. Ser-43 is modified (phosphoserine). An N6-acetyllysine modification is found at Lys-52. The interval 54–113 (TWEKLLLAARAIVAIENPADVSVISSRNTGQRAVLKFAAATGATPIAGRFTPGTFTNQIQ) is interaction with PPP1R16B. Lys-89 carries the post-translational modification N6-acetyllysine; alternate. A Glycyl lysine isopeptide (Lys-Gly) (interchain with G-Cter in SUMO2); alternate cross-link involves residue Lys-89. Thr-97 carries the post-translational modification Phosphothreonine. Laminin-binding stretches follow at residues 161–180 (IPCN…MLAR) and 205–229 (RDPE…EFQG). 5 [DE]-W-[ST] repeats span residues 230–232 (EWT), 247–249 (DWS), 266–268 (DWS), 275–277 (DWS), and 293–295 (EWS). The segment at 242–295 (QPEVADWSEGVQVPSVPIQQFPTEDWSAQPATEDWSAAPTAQATEWVGATTEWS) is laminin-binding. Residues 266–295 (DWSAQPATEDWSAAPTAQATEWVGATTEWS) form a disordered region.

Belongs to the universal ribosomal protein uS2 family. In terms of assembly, monomer (37LRP) and homodimer (67LR). Component of the small ribosomal subunit. Mature ribosomes consist of a small (40S) and a large (60S) subunit. The 40S subunit contains about 33 different proteins and 1 molecule of RNA (18S). The 60S subunit contains about 49 different proteins and 3 molecules of RNA (28S, 5.8S and 5S). Interacts with RPS21. Interacts with several laminins including at least LAMB1. Interacts with MDK. The mature dimeric form interacts with PPP1R16B (via its fourth ankyrin repeat). Interacts with PPP1CA only in the presence of PPP1R16B. In terms of processing, acylated. Acylation may be a prerequisite for conversion of the monomeric 37 kDa laminin receptor precursor (37LRP) to the mature dimeric 67 kDa laminin receptor (67LR), and may provide a mechanism for membrane association. Cleaved by stromelysin-3 (ST3) at the cell surface. Cleavage by stromelysin-3 may be a mechanism to alter cell-extracellular matrix interactions. As to expression, expressed in most neurons and in a subset of glial cells. The overall distribution of LR correlates with that reported for laminin-1 but also with brain regions classically associated with prion-related neurodegeneration.

Its subcellular location is the cell membrane. The protein localises to the cytoplasm. It localises to the nucleus. Required for the assembly and/or stability of the 40S ribosomal subunit. Required for the processing of the 20S rRNA-precursor to mature 18S rRNA in a late step of the maturation of 40S ribosomal subunits. Also functions as a cell surface receptor for laminin. Plays a role in cell adhesion to the basement membrane and in the consequent activation of signaling transduction pathways. May play a role in cell fate determination and tissue morphogenesis. Also acts as a receptor for several other ligands, including the pathogenic prion protein, viruses, and bacteria. Acts as a PPP1R16B-dependent substrate of PPP1CA. The sequence is that of Small ribosomal subunit protein uS2 (Rpsa) from Rattus norvegicus (Rat).